A 132-amino-acid polypeptide reads, in one-letter code: Fatty acid-binding protein, intestinal (132 aa).

Ala-2 bears the N-acetylalanine mark. Trp-83 and Arg-107 together coordinate hexadecanoate. Positions 83 and 107 each coordinate tetradecanoate.

Belongs to the calycin superfamily. Fatty-acid binding protein (FABP) family.

Its subcellular location is the cytoplasm. Its function is as follows. FABPs are thought to play a role in the intracellular transport of long-chain fatty acids and their acyl-CoA esters. FABP2 is probably involved in triglyceride-rich lipoprotein synthesis. Binds saturated long-chain fatty acids with a high affinity, but binds with a lower affinity to unsaturated long-chain fatty acids. FABP2 may also help maintain energy homeostasis by functioning as a lipid sensor. In Bos taurus (Bovine), this protein is Fatty acid-binding protein, intestinal (FABP2).